Consider the following 149-residue polypeptide: MSVSLLRKGLDLLREERSGAESSSKKRNSSSKPKPCLSSSKTGMRKQLRRLKQQGLRHDQKATAKGRVIRSAVEEFKKQSAKDHLQQNLQYMLDSSSVTSKEVVDKILKQNRGRKAKDIEIKQHRQIKEKSVFSDADFKRFELEYFGSK.

The segment at 1-64 (MSVSLLRKGL…GLRHDQKATA (64 aa)) is disordered. Over residues 8–19 (KGLDLLREERSG) the composition is skewed to basic and acidic residues. Over residues 30–41 (SSKPKPCLSSSK) the composition is skewed to low complexity. The span at 43-52 (GMRKQLRRLK) shows a compositional bias: basic residues.

It belongs to the AROS family. In terms of assembly, part of the small subunit (SSU) processome, composed of more than 70 proteins and the RNA chaperone small nucleolar RNA (snoRNA) U3.

It is found in the nucleus. The protein localises to the nucleolus. Functionally, part of the small subunit (SSU) processome, first precursor of the small eukaryotic ribosomal subunit. During the assembly of the SSU processome in the nucleolus, many ribosome biogenesis factors, an RNA chaperone and ribosomal proteins associate with the nascent pre-rRNA and work in concert to generate RNA folding, modifications, rearrangements and cleavage as well as targeted degradation of pre-ribosomal RNA by the RNA exosome. Acts as a chaperone that specifically mediates the integration of RPS19 in state post-A1. Direct regulator of SIRT1. This Xenopus tropicalis (Western clawed frog) protein is Active regulator of SIRT1 (rps19bp1).